Reading from the N-terminus, the 368-residue chain is Phosphoribosylformylglycinamidine cyclo-ligase (368 aa).

It belongs to the AIR synthase family.

The protein localises to the cytoplasm. It carries out the reaction 2-formamido-N(1)-(5-O-phospho-beta-D-ribosyl)acetamidine + ATP = 5-amino-1-(5-phospho-beta-D-ribosyl)imidazole + ADP + phosphate + H(+). The protein operates within purine metabolism; IMP biosynthesis via de novo pathway; 5-amino-1-(5-phospho-D-ribosyl)imidazole from N(2)-formyl-N(1)-(5-phospho-D-ribosyl)glycinamide: step 2/2. The polypeptide is Phosphoribosylformylglycinamidine cyclo-ligase (Novosphingobium aromaticivorans (strain ATCC 700278 / DSM 12444 / CCUG 56034 / CIP 105152 / NBRC 16084 / F199)).